Reading from the N-terminus, the 529-residue chain is MTLDNYNIFNDEYLFGMPLSPLPKVLGTFDGIQLAPTLTTPTLTPTTTRSLQEAFFELTNDPGTPYQATFKPPPLGLMPGGNNGNGVTNVPTTTATATVVGVVNPMISQLPYEVNSALQGTDSDNSNASWADAQNNEDQDTTDTSSAHTDSTSYQNGHMAGSSVNGGGANNFTNVLAGINAGRGSTQGSNTNTSNSATPARRGGGRRPNRNTNMSPEEEEKRRIRRERNKQAAARCRKRRVDQTNELTYEVEQLEKKRDGLKKEMETLTDVKNQLEFFLRAHHSSCQKIRTDLLSVTTCNGLIAPVGLPSAGSCDSGSSSHHNNNSNDSSNGTITGLDASLNSTGRSNSPLDLKPQIKDEPLDGGLDSSCLLDQDGPPPSKRFPLPPMSTLMTPTGVSSGSLQTPIASTAPGGFGSAYPITTTKGSMNSPTLNELNKPKERPNTLAVQRPFVPQMHLNLTSNHNKMPGSGPTHIQGVPIQTPTTGFNFDSLMDGGTGLTPVSGPLVPSQNKHPLELPTPTAEPSKLVSL.

Polar residues predominate over residues 118 to 134 (LQGTDSDNSNASWADAQ). 2 disordered regions span residues 118–166 (LQGT…SVNG) and 180–239 (NAGR…CRKR). Low complexity-rich tracts occupy residues 142 to 153 (TDTSSAHTDSTS) and 182 to 201 (GRGS…TPAR). The bZIP domain maps to 219-282 (EEKRRIRRER…NQLEFFLRAH (64 aa)). The tract at residues 221-240 (KRRIRRERNKQAAARCRKRR) is basic motif. Residues 247 to 275 (LTYEVEQLEKKRDGLKKEMETLTDVKNQL) are leucine-zipper. Disordered regions lie at residues 311–390 (AGSC…PMST) and 493–529 (DGGT…LVSL). Residues 315–332 (DSGSSSHHNNNSNDSSNG) show a composition bias toward low complexity. Polar residues predominate over residues 340–350 (SLNSTGRSNSP). The residue at position 349 (Ser349) is a Phosphoserine. A compositionally biased stretch (low complexity) spans 363-375 (DGGLDSSCLLDQD). The segment covering 376–387 (GPPPSKRFPLPP) has biased composition (pro residues).

The protein belongs to the bZIP family. Fos subfamily. Homodimer. Heterodimer with Jra. The kay-Jra heterodimer binds more stably to the AP-1 site than either of the two proteins alone.

Its subcellular location is the nucleus. In terms of biological role, developmentally regulated transcription factor AP-1 binds and recognizes the enhancer DNA sequence: 5'-TGA[CG]TCA-3'. May play a role in the function or determination of a particular subset of cells in the developing embryo. Is able to carry out its function either independently of or in conjunction with Jra. The sequence is that of Transcription factor kayak from Drosophila ananassae (Fruit fly).